Reading from the N-terminus, the 219-residue chain is ATP phosphoribosyltransferase (219 aa).

Belongs to the ATP phosphoribosyltransferase family. Short subfamily. As to quaternary structure, heteromultimer composed of HisG and HisZ subunits.

The protein resides in the cytoplasm. The catalysed reaction is 1-(5-phospho-beta-D-ribosyl)-ATP + diphosphate = 5-phospho-alpha-D-ribose 1-diphosphate + ATP. The protein operates within amino-acid biosynthesis; L-histidine biosynthesis; L-histidine from 5-phospho-alpha-D-ribose 1-diphosphate: step 1/9. Catalyzes the condensation of ATP and 5-phosphoribose 1-diphosphate to form N'-(5'-phosphoribosyl)-ATP (PR-ATP). Has a crucial role in the pathway because the rate of histidine biosynthesis seems to be controlled primarily by regulation of HisG enzymatic activity. The protein is ATP phosphoribosyltransferase of Paramagnetospirillum magneticum (strain ATCC 700264 / AMB-1) (Magnetospirillum magneticum).